The following is a 551-amino-acid chain: Arginine--tRNA ligase (551 aa).

Residues 124-134 carry the 'HIGH' region motif; that stretch reads ANPTGPLHIGH.

Belongs to the class-I aminoacyl-tRNA synthetase family. As to quaternary structure, monomer.

The protein resides in the cytoplasm. The enzyme catalyses tRNA(Arg) + L-arginine + ATP = L-arginyl-tRNA(Arg) + AMP + diphosphate. The protein is Arginine--tRNA ligase of Solidesulfovibrio magneticus (strain ATCC 700980 / DSM 13731 / RS-1) (Desulfovibrio magneticus).